The following is a 230-amino-acid chain: ATP phosphoribosyltransferase (230 aa).

The protein belongs to the ATP phosphoribosyltransferase family. Short subfamily. In terms of assembly, heteromultimer composed of HisG and HisZ subunits.

The protein localises to the cytoplasm. The enzyme catalyses 1-(5-phospho-beta-D-ribosyl)-ATP + diphosphate = 5-phospho-alpha-D-ribose 1-diphosphate + ATP. It participates in amino-acid biosynthesis; L-histidine biosynthesis; L-histidine from 5-phospho-alpha-D-ribose 1-diphosphate: step 1/9. Catalyzes the condensation of ATP and 5-phosphoribose 1-diphosphate to form N'-(5'-phosphoribosyl)-ATP (PR-ATP). Has a crucial role in the pathway because the rate of histidine biosynthesis seems to be controlled primarily by regulation of HisG enzymatic activity. This is ATP phosphoribosyltransferase from Agrobacterium fabrum (strain C58 / ATCC 33970) (Agrobacterium tumefaciens (strain C58)).